The following is a 265-amino-acid chain: MMEKMILGRYIPGNSWLHRIDPRAKITAVMAFIAIVFLANNWLTYALMFAYVLYLVLTSKVPFLFFIKGLQPIFWLILITLLLQVFFTKGGTVLVDLGLLQITTLGLANGAMMFCRFVLIIFMTTLLTLTTSPIELTDGLEKILAPFRLVHLPVHELALMLSISLRFIPTLMDETEKILKAQKARGVEFTSGKWSDRIKAIIPLLVPLFISAFKRAEDLAIAMEARGYRGGKGRTRFRLLRWRFADTCLLISLAVLSGLLFWLRS.

6 helical membrane passes run 29 to 49, 63 to 83, 94 to 114, 117 to 137, 143 to 163, and 243 to 263; these read VMAF…ALMF, FLFF…TLLL, LVDL…AMMF, FVLI…IELT, ILAP…MLSI, and RFAD…LFWL.

The protein belongs to the energy-coupling factor EcfT family. As to quaternary structure, forms a stable energy-coupling factor (ECF) transporter complex composed of 2 membrane-embedded substrate-binding proteins (S component), 2 ATP-binding proteins (A component) and 2 transmembrane proteins (T component). May be able to interact with more than 1 S component at a time.

Its subcellular location is the cell membrane. Transmembrane (T) component of an energy-coupling factor (ECF) ABC-transporter complex. Unlike classic ABC transporters this ECF transporter provides the energy necessary to transport a number of different substrates. This is Energy-coupling factor transporter transmembrane protein EcfT from Listeria innocua serovar 6a (strain ATCC BAA-680 / CLIP 11262).